The primary structure comprises 297 residues: Homoserine kinase (297 aa).

82-92 provides a ligand contact to ATP; the sequence is PLTRGLGSSAS.

It belongs to the GHMP kinase family. Homoserine kinase subfamily.

The protein resides in the cytoplasm. The catalysed reaction is L-homoserine + ATP = O-phospho-L-homoserine + ADP + H(+). It participates in amino-acid biosynthesis; L-threonine biosynthesis; L-threonine from L-aspartate: step 4/5. Catalyzes the ATP-dependent phosphorylation of L-homoserine to L-homoserine phosphate. The sequence is that of Homoserine kinase from Bacillus thuringiensis (strain Al Hakam).